The chain runs to 194 residues: Large ribosomal subunit protein eL15 (194 aa).

Residues 164-194 (AGRKARGLRRKGRGAEKVRPSLRANFRKKRR) form a disordered region. Positions 166–175 (RKARGLRRKG) are enriched in basic residues.

This sequence belongs to the eukaryotic ribosomal protein eL15 family.

The chain is Large ribosomal subunit protein eL15 (rpl15e) from Archaeoglobus fulgidus (strain ATCC 49558 / DSM 4304 / JCM 9628 / NBRC 100126 / VC-16).